The following is a 196-amino-acid chain: MRVKICGITNLRDALHAVECGADALGFVFYNESPRYITPKDAKRIIDQLPPFVERVGLFVNEGVETIDTVCRYSDISLAQIHFDVDEESLDAISLKTLPVVRARTAEDVHRFPDRYRLVDAYCEAYGGSGKRLNLEWFDGVDCSRIILAGGLTPDNVNEVKQYGFYGVDVSSGVESVKGKKDLQKVERFLRNAKSL.

This sequence belongs to the TrpF family.

The enzyme catalyses N-(5-phospho-beta-D-ribosyl)anthranilate = 1-(2-carboxyphenylamino)-1-deoxy-D-ribulose 5-phosphate. The protein operates within amino-acid biosynthesis; L-tryptophan biosynthesis; L-tryptophan from chorismate: step 3/5. This Sulfurovum sp. (strain NBC37-1) protein is N-(5'-phosphoribosyl)anthranilate isomerase.